The primary structure comprises 371 residues: Putative phosphoserine aminotransferase (371 aa).

Residue Arg45 participates in L-glutamate binding. Phe103, Thr149, Asp171, and Gln194 together coordinate pyridoxal 5'-phosphate. An N6-(pyridoxal phosphate)lysine modification is found at Lys195. 246-247 is a binding site for pyridoxal 5'-phosphate; that stretch reads NT.

It belongs to the class-V pyridoxal-phosphate-dependent aminotransferase family. SerC subfamily. Homodimer. Pyridoxal 5'-phosphate is required as a cofactor.

Its subcellular location is the cytoplasm. It catalyses the reaction O-phospho-L-serine + 2-oxoglutarate = 3-phosphooxypyruvate + L-glutamate. The catalysed reaction is 4-(phosphooxy)-L-threonine + 2-oxoglutarate = (R)-3-hydroxy-2-oxo-4-phosphooxybutanoate + L-glutamate. It participates in amino-acid biosynthesis; L-serine biosynthesis; L-serine from 3-phospho-D-glycerate: step 2/3. It functions in the pathway cofactor biosynthesis; pyridoxine 5'-phosphate biosynthesis; pyridoxine 5'-phosphate from D-erythrose 4-phosphate: step 3/5. Its function is as follows. Catalyzes the reversible conversion of 3-phosphohydroxypyruvate to phosphoserine and of 3-hydroxy-2-oxo-4-phosphonooxybutanoate to phosphohydroxythreonine. The polypeptide is Putative phosphoserine aminotransferase (Mycolicibacterium vanbaalenii (strain DSM 7251 / JCM 13017 / BCRC 16820 / KCTC 9966 / NRRL B-24157 / PYR-1) (Mycobacterium vanbaalenii)).